Here is a 386-residue protein sequence, read N- to C-terminus: Protein lin-8 (386 aa).

Positions 175-285 (LGLEARRASK…FSQQYGGGGS (111 aa)) are sufficient for interaction with lin-35. The interval 212 to 240 (EEPYEETGSNWSDPAPEPSQSKSQSPEAK) is disordered. The segment covering 229-240 (PSQSKSQSPEAK) has biased composition (low complexity).

Belongs to the lin-8 family. In terms of assembly, interacts with lin-35 (via C-terminus). In terms of tissue distribution, widely expressed throughout development, with particularly prominent expression in the germline and in neuronal nuclei of the head (at protein level).

It localises to the nucleus. Functionally, acts as a synthetic multivulva class A (synMuvA) protein and redundantly inhibits lin-3/EGF expression to prevent inappropriate vulva induction. The chain is Protein lin-8 from Caenorhabditis elegans.